The sequence spans 401 residues: Tumor necrosis factor receptor superfamily member 11B (401 aa).

The N-terminal stretch at 1–21 (MNKWLCCALLVFLDIIEWTTQ) is a signal peptide. 4 TNFR-Cys repeats span residues 24–62 (FPPKYLHYDPETGRQLLCDKCAPGTYLKQHCTVRRKTLC), 65–105 (CPDY…NRVC), 107–142 (CEEGRYLELEFCLKHRSCPPGLGVLQAGTPERNTVC), and 145–185 (CPDG…DNVC). 8 disulfides stabilise this stretch: cysteine 41-cysteine 54, cysteine 44-cysteine 62, cysteine 65-cysteine 80, cysteine 83-cysteine 97, cysteine 87-cysteine 105, cysteine 107-cysteine 118, cysteine 124-cysteine 142, and cysteine 145-cysteine 160. Asparagine 98 is a glycosylation site (N-linked (GlcNAc...) asparagine). Asparagine 165 and asparagine 178 each carry an N-linked (GlcNAc...) asparagine glycan. A disulfide bridge connects residues cysteine 166 and cysteine 185. 2 consecutive Death domains span residues 198–269 (DVTL…MVKK) and 270–365 (IIQD…THSL). Asparagine 289 carries an N-linked (GlcNAc...) asparagine glycan.

In terms of assembly, homodimer. Interacts with TNFSF10 and TNFSF11.

Its subcellular location is the secreted. In terms of biological role, acts as a decoy receptor for TNFSF11/RANKL and thereby neutralizes its function in osteoclastogenesis. Inhibits the activation of osteoclasts and promotes osteoclast apoptosis in vitro. Bone homeostasis seems to depend on the local ratio between TNFSF11 and TNFRSF11B. May also play a role in preventing arterial calcification. May act as decoy receptor for TNFSF10/TRAIL and protect against apoptosis. TNFSF10/TRAIL binding blocks the inhibition of osteoclastogenesis. This is Tumor necrosis factor receptor superfamily member 11B (Tnfrsf11b) from Rattus norvegicus (Rat).